Reading from the N-terminus, the 373-residue chain is Probable G-protein coupled receptor 173 (373 aa).

Topologically, residues Met1 to Leu26 are extracellular. Asn3 is a glycosylation site (N-linked (GlcNAc...) asparagine). The helical transmembrane segment at Val27–Val47 threads the bilayer. The Cytoplasmic segment spans residues Leu48 to Tyr59. Residues Phe60–Leu80 form a helical membrane-spanning segment. Residues Ala81–Lys97 lie on the Extracellular side of the membrane. Cys96 and Cys174 are joined by a disulfide. The helical transmembrane segment at Ile98 to Ser118 threads the bilayer. The Cytoplasmic portion of the chain corresponds to Val119 to Thr139. Residues Cys140–Phe160 traverse the membrane as a helical segment. Residues Asp161 to Gly188 lie on the Extracellular side of the membrane. A glycan (N-linked (GlcNAc...) asparagine) is linked at Asn184. The chain crosses the membrane as a helical span at residues Phe189 to Leu209. Topologically, residues Phe210–Met287 are cytoplasmic. Residues Phe288–Trp308 traverse the membrane as a helical segment. Residues Arg309 to Leu322 are Extracellular-facing. The helical transmembrane segment at Ala323–Leu343 threads the bilayer. Over Asn344 to Met373 the chain is Cytoplasmic.

This sequence belongs to the G-protein coupled receptor 1 family. In terms of tissue distribution, expressed in the ovary, specifically in granulosa cells of follicles that have passed the primary stage and in oocytes (at protein level). Expressed in preadipocytes.

It localises to the cell membrane. In terms of biological role, is a receptor for the SMIM20 derived peptides Phoenixin-14 and Phoenixin-20. It mediates the Phoenixin-14 and Phoenixin-20 augmentation of gonadotropin-releasing hormone (GNRH) signaling in the hypothalamus and pituitary gland. In the ovary, it mediates the effects of Phoenixin-14 and Phoenixin-20 induced granulosa cell proliferation during follicular growth. The protein is Probable G-protein coupled receptor 173 (Gpr173) of Mus musculus (Mouse).